The chain runs to 653 residues: Probable syringafactin export ATP-binding/permease protein SyfD (653 aa).

In terms of domain architecture, ABC transporter spans 6-244 (LELNGVTRRF…NEKTTERLPT (239 aa)). An ATP-binding site is contributed by 42-49 (GASGSGKS). 5 helical membrane passes run 252–272 (LMAN…ALIS), 278–298 (LLTM…VAIG), 526–546 (LALL…IGVM), 583–603 (MVCL…GYVF), and 616–636 (LGSI…FGFV).

The protein belongs to the ABC transporter superfamily. Macrolide exporter (TC 3.A.1.122) family. Probably part of a tripartite efflux system, which is composed of an inner membrane transporter, a periplasmic membrane fusion protein, and an outer membrane component.

Its subcellular location is the cell inner membrane. Functionally, probably involved in the export of syringafactins. This is Probable syringafactin export ATP-binding/permease protein SyfD from Pseudomonas syringae pv. syringae (strain B728a).